A 147-amino-acid polypeptide reads, in one-letter code: Hemoglobin subunit beta-H1 (147 aa).

Residues 3-147 (HFTAEEKAAI…VANALSHKYH (145 aa)) form the Globin domain. The heme b site is built by His64 and His93.

It belongs to the globin family. As to quaternary structure, heterotetramer of two alpha chains and two beta chains. As to expression, red blood cells.

This is an embryonic beta-type chain. This is Hemoglobin subunit beta-H1 (Hbb-bh1) from Mus musculus (Mouse).